Consider the following 447-residue polypeptide: Alpha-1,3-mannosyl-glycoprotein 2-beta-N-acetylglucosaminyltransferase (447 aa).

Over 1–6 (MLKKQS) the chain is Cytoplasmic. The chain crosses the membrane as a helical; Signal-anchor for type II membrane protein span at residues 7 to 29 (AGLVLWGAILFVAWNALLLLFFW). Residues 30–447 (TRPVPSRLPS…TWDGYDPSWT (418 aa)) are Lumenal-facing. A disulfide bond links C115 and C145. R117, D144, H190, and D212 together coordinate substrate. Residue D213 participates in Mn(2+) binding. C239 and C305 are joined by a disulfide. D291 (proton acceptor) is an active-site residue. S322 serves as a coordination point for substrate.

Belongs to the glycosyltransferase 13 family. Interacts with MGAT4D. Interacts with BRI3. Mn(2+) serves as cofactor.

It is found in the golgi apparatus membrane. The protein localises to the cytoplasm. The protein resides in the perinuclear region. It catalyses the reaction N(4)-(alpha-D-Man-(1-&gt;3)-[alpha-D-Man-(1-&gt;3)-[alpha-D-Man-(1-&gt;6)]-alpha-D-Man-(1-&gt;6)]-beta-D-Man-(1-&gt;4)-beta-D-GlcNAc-(1-&gt;4)-beta-D-GlcNAc)-L-asparaginyl-[protein] (N-glucan mannose isomer 5A1,2) + UDP-N-acetyl-alpha-D-glucosamine = N(4)-{beta-D-GlcNAc-(1-&gt;2)-alpha-D-Man-(1-&gt;3)-[alpha-D-Man-(1-&gt;3)-[alpha-D-Man-(1-&gt;6)]-alpha-D-Man-(1-&gt;6)]-beta-D-Man-(1-&gt;4)-beta-D-GlcNAc-(1-&gt;4)-beta-D-GlcNAc}-L-asparaginyl-[protein] + UDP + H(+). Its pathway is protein modification; protein glycosylation. Functionally, initiates complex N-linked carbohydrate formation. Essential for the conversion of high-mannose to hybrid and complex N-glycans. In Oryctolagus cuniculus (Rabbit), this protein is Alpha-1,3-mannosyl-glycoprotein 2-beta-N-acetylglucosaminyltransferase (MGAT1).